A 266-amino-acid chain; its full sequence is Beta-lactamase OXA-10 (266 aa).

An N-terminal signal peptide occupies residues 1–19; that stretch reads MKTFAAYVIIACLSSTALA. A disulfide bridge links Cys44 with Cys51. Ser67 acts as the Acyl-ester intermediate in catalysis. Position 70 is an N6-carboxylysine (Lys70). Positions 115, 206, 208, and 250 each coordinate a beta-lactam.

This sequence belongs to the class-D beta-lactamase family. In terms of assembly, dimer.

It localises to the periplasm. It carries out the reaction a beta-lactam + H2O = a substituted beta-amino acid. With respect to regulation, activated, with respect to most beta-lactam substrates, in the presence of 0.05 M sodium bicarbonate. Its function is as follows. Class D beta-lactamase which confers resistance to the beta-lactam antibiotics, including penicillin, carbenicillin and oxacillin, and also some cephalosporins. Confers weak resistance to some carbapenems, in E.coli strain C600Z1. Acts via hydrolysis of the beta-lactam ring. Has penicillin- and cephalosporin-hydrolyzing activities. This is Beta-lactamase OXA-10 from Pseudomonas aeruginosa.